Here is a 122-residue protein sequence, read N- to C-terminus: Serum amyloid A-1 protein (122 aa).

The N-terminal stretch at M1–G19 is a signal peptide. The segment at G20–A45 is important for amyloid formation. Residues H91–K108 are compositionally biased toward basic and acidic residues. Residues H91–Y122 are disordered.

This sequence belongs to the SAA family. In terms of assembly, homohexamer; dimer of trimers. Can form amyloid fibrils after partial proteolysis; the native, undenatured protein does not form amyloid fibrils (in vitro). Apolipoprotein of the HDL complex. Binds to heparin. Detected in blood plasma (at protein level). Detected in liver.

It localises to the secreted. Its function is as follows. Major acute phase protein. The sequence is that of Serum amyloid A-1 protein (Saa1) from Mus musculus (Mouse).